The following is a 602-amino-acid chain: Multicopper oxidase aurL2 (602 aa).

A signal peptide spans 1–17 (MLFRFLALLPFVAGAFA). 2 consecutive Plastocyanin-like domains span residues 38 to 149 (DIKI…VRDA) and 160 to 317 (IPLL…KYRC). Residues Asn52 and Asn80 are each glycosylated (N-linked (GlcNAc...) asparagine). Cu cation is bound by residues His84, His86, His130, and His132. 7 N-linked (GlcNAc...) asparagine glycosylation sites follow: Asn201, Asn247, Asn337, Asn383, Asn387, Asn419, and Asn424. Residues 421 to 556 (TTPNYTLALE…QVMGMATVWV (136 aa)) enclose the Plastocyanin-like 3 domain. His469 is a Cu cation binding site. N-linked (GlcNAc...) asparagine glycans are attached at residues Asn482 and Asn486.

It belongs to the multicopper oxidase family.

The protein operates within pigment biosynthesis. Its function is as follows. Multicopper oxidase; part of the gene cluster that mediates the biosynthesis of aurofusarin, a red mycelium pigment which is acting as a mycotoxin. The first step is performed by the polyketide synthase which condenses one acetyl-CoA and 6 malonyl-CoA units to form the first intermediate, the cyclic heptaketide and yellow pigment YWA1. The C2 hydroxyl group in the pyrone ring of YWA1 is probably formed during ring closure by an aldol-type cyclization reaction. The dehydratase aurZ then acts as the first tailoring enzyme in the aurofusarin biosynthetic pathway by converting YWA1 to nor-rubrofusarin. Nor-rubrofusarin is then methylated to rubrofusarin by the O-methyltransferase aurJ. Rubrofusarin is then transported across the plasma membrane by the rubrofusarin-specific pump aurT for further enzymatic processing by the extracellular complex composed of GIP1, aurF, aurO and aurS to yield aurofusarin. This is Multicopper oxidase aurL2 (aurL2) from Gibberella zeae (strain ATCC MYA-4620 / CBS 123657 / FGSC 9075 / NRRL 31084 / PH-1) (Wheat head blight fungus).